A 305-amino-acid chain; its full sequence is Dihydroorotate dehydrogenase B (NAD(+)), catalytic subunit (305 aa).

FMN-binding positions include S23 and 47 to 48; that span reads KG. Substrate contacts are provided by residues K47 and 71–75; that span reads NAIGL. FMN is bound by residues N101 and N129. Substrate is bound at residue N129. C132 serves as the catalytic Nucleophile. FMN-binding residues include K167 and I193. A substrate-binding site is contributed by 194–195; it reads NT. Residues G219, 245 to 246, and 267 to 268 each bind FMN; these read GG and GT.

Belongs to the dihydroorotate dehydrogenase family. Type 1 subfamily. As to quaternary structure, heterotetramer of 2 PyrK and 2 PyrD type B subunits. Requires FMN as cofactor.

The protein localises to the cytoplasm. It carries out the reaction (S)-dihydroorotate + NAD(+) = orotate + NADH + H(+). It participates in pyrimidine metabolism; UMP biosynthesis via de novo pathway; orotate from (S)-dihydroorotate (NAD(+) route): step 1/1. Catalyzes the conversion of dihydroorotate to orotate with NAD(+) as electron acceptor. The sequence is that of Dihydroorotate dehydrogenase B (NAD(+)), catalytic subunit (pyrD) from Geobacter sp. (strain M21).